The chain runs to 126 residues: Protein ApaG (126 aa).

In terms of domain architecture, ApaG spans Ser-2–His-126.

The chain is Protein ApaG from Pseudomonas entomophila (strain L48).